The following is a 90-amino-acid chain: Lectin-1 (90 aa).

Pyrrolidone carboxylic acid is present on Gln-1. An intrachain disulfide couples Cys-46 to Cys-71.

Post-translationally, the N-terminus is blocked. In terms of processing, contains seven disulfide bonds. Proteolytically cleaved. Major form may consist of cleaved, disulfide-bonded subunits.

Its function is as follows. Lectin with specificity for complex N-linked glycans and O-linked glycans. Has hemagglutinating activity towards rabbit erythrocytes that is inhibited by N-acetyl-D-galactosamine. This Hypnea cervicornis (Brazilian red alga) protein is Lectin-1.